A 332-amino-acid chain; its full sequence is Phosphate acyltransferase (332 aa).

This sequence belongs to the PlsX family. In terms of assembly, homodimer. Probably interacts with PlsY.

It is found in the cytoplasm. It catalyses the reaction a fatty acyl-[ACP] + phosphate = an acyl phosphate + holo-[ACP]. It participates in lipid metabolism; phospholipid metabolism. Its function is as follows. Catalyzes the reversible formation of acyl-phosphate (acyl-PO(4)) from acyl-[acyl-carrier-protein] (acyl-ACP). This enzyme utilizes acyl-ACP as fatty acyl donor, but not acyl-CoA. In Nitratiruptor sp. (strain SB155-2), this protein is Phosphate acyltransferase.